Reading from the N-terminus, the 359-residue chain is Phospho-N-acetylmuramoyl-pentapeptide-transferase (359 aa).

The next 10 membrane-spanning stretches (helical) occupy residues Q3–I23, V55–I75, G84–I104, T117–F137, I156–A176, L190–F210, L231–A251, I255–T275, V283–F303, and V330–Y350.

Belongs to the glycosyltransferase 4 family. MraY subfamily. It depends on Mg(2+) as a cofactor.

The protein localises to the cell membrane. It catalyses the reaction UDP-N-acetyl-alpha-D-muramoyl-L-alanyl-gamma-D-glutamyl-meso-2,6-diaminopimeloyl-D-alanyl-D-alanine + di-trans,octa-cis-undecaprenyl phosphate = di-trans,octa-cis-undecaprenyl diphospho-N-acetyl-alpha-D-muramoyl-L-alanyl-D-glutamyl-meso-2,6-diaminopimeloyl-D-alanyl-D-alanine + UMP. It functions in the pathway cell wall biogenesis; peptidoglycan biosynthesis. Its function is as follows. Catalyzes the initial step of the lipid cycle reactions in the biosynthesis of the cell wall peptidoglycan: transfers peptidoglycan precursor phospho-MurNAc-pentapeptide from UDP-MurNAc-pentapeptide onto the lipid carrier undecaprenyl phosphate, yielding undecaprenyl-pyrophosphoryl-MurNAc-pentapeptide, known as lipid I. The chain is Phospho-N-acetylmuramoyl-pentapeptide-transferase from Mycolicibacterium vanbaalenii (strain DSM 7251 / JCM 13017 / BCRC 16820 / KCTC 9966 / NRRL B-24157 / PYR-1) (Mycobacterium vanbaalenii).